The chain runs to 227 residues: Cytochrome c oxidase subunit 2 (227 aa).

The Mitochondrial intermembrane segment spans residues 1–14; it reads MAYPFQLGLQDATS. The chain crosses the membrane as a helical span at residues 15-45; that stretch reads PIMEELTNFHDHTLMIVFLISSLVLYLISLM. Topologically, residues 46–59 are mitochondrial matrix; that stretch reads LSTKLIHTSTMDAQ. The helical transmembrane segment at 60-87 threads the bilayer; that stretch reads EVETIWTILPAIILIMIALPSLRILYMM. The Mitochondrial intermembrane segment spans residues 88–227; it reads DEINNPALTV…LFENWSISMS (140 aa). The Cu cation site is built by His-161, Cys-196, Glu-198, Cys-200, His-204, and Met-207. Glu-198 lines the Mg(2+) pocket.

It belongs to the cytochrome c oxidase subunit 2 family. In terms of assembly, component of the cytochrome c oxidase (complex IV, CIV), a multisubunit enzyme composed of 14 subunits. The complex is composed of a catalytic core of 3 subunits MT-CO1, MT-CO2 and MT-CO3, encoded in the mitochondrial DNA, and 11 supernumerary subunits COX4I, COX5A, COX5B, COX6A, COX6B, COX6C, COX7A, COX7B, COX7C, COX8 and NDUFA4, which are encoded in the nuclear genome. The complex exists as a monomer or a dimer and forms supercomplexes (SCs) in the inner mitochondrial membrane with NADH-ubiquinone oxidoreductase (complex I, CI) and ubiquinol-cytochrome c oxidoreductase (cytochrome b-c1 complex, complex III, CIII), resulting in different assemblies (supercomplex SCI(1)III(2)IV(1) and megacomplex MCI(2)III(2)IV(2)). Found in a complex with TMEM177, COA6, COX18, COX20, SCO1 and SCO2. Interacts with TMEM177 in a COX20-dependent manner. Interacts with COX20. Interacts with COX16. Cu cation serves as cofactor.

Its subcellular location is the mitochondrion inner membrane. The catalysed reaction is 4 Fe(II)-[cytochrome c] + O2 + 8 H(+)(in) = 4 Fe(III)-[cytochrome c] + 2 H2O + 4 H(+)(out). Component of the cytochrome c oxidase, the last enzyme in the mitochondrial electron transport chain which drives oxidative phosphorylation. The respiratory chain contains 3 multisubunit complexes succinate dehydrogenase (complex II, CII), ubiquinol-cytochrome c oxidoreductase (cytochrome b-c1 complex, complex III, CIII) and cytochrome c oxidase (complex IV, CIV), that cooperate to transfer electrons derived from NADH and succinate to molecular oxygen, creating an electrochemical gradient over the inner membrane that drives transmembrane transport and the ATP synthase. Cytochrome c oxidase is the component of the respiratory chain that catalyzes the reduction of oxygen to water. Electrons originating from reduced cytochrome c in the intermembrane space (IMS) are transferred via the dinuclear copper A center (CU(A)) of subunit 2 and heme A of subunit 1 to the active site in subunit 1, a binuclear center (BNC) formed by heme A3 and copper B (CU(B)). The BNC reduces molecular oxygen to 2 water molecules using 4 electrons from cytochrome c in the IMS and 4 protons from the mitochondrial matrix. The polypeptide is Cytochrome c oxidase subunit 2 (MT-CO2) (Gerbilliscus robustus (Fringe-tailed gerbil)).